Here is a 773-residue protein sequence, read N- to C-terminus: 3-isopropylmalate dehydratase (773 aa).

Residues cysteine 355, cysteine 415, and cysteine 418 each contribute to the [4Fe-4S] cluster site.

Belongs to the aconitase/IPM isomerase family. As to quaternary structure, monomer. [4Fe-4S] cluster serves as cofactor.

The catalysed reaction is (2R,3S)-3-isopropylmalate = (2S)-2-isopropylmalate. Its pathway is amino-acid biosynthesis; L-leucine biosynthesis; L-leucine from 3-methyl-2-oxobutanoate: step 2/4. Functionally, catalyzes the isomerization between 2-isopropylmalate and 3-isopropylmalate, via the formation of 2-isopropylmaleate. This is 3-isopropylmalate dehydratase (LEU1) from Mycosarcoma maydis (Corn smut fungus).